Consider the following 343-residue polypeptide: MEKKKIVLKNFTEDELKEFMKTIDEKPFRGSQIFSWIYKGAKTFDDMNNIPKSLRNKLEEVSCIGHIDIELKLESKVDNTKKYLFLLDDGNIIETVMMDYDSRVTVCVSNQVGCRMGCNFCASTMDGLIRNLEPWEILDQVIKIQEDTGKRVSNLVLMGSGEPLDNFENTKQFLKIINEKNGLNIGYRHITLSTCGIVPKMYELADLEIAINLALSLHSPYDEERRKIMPVANAYSIEEILNACRYYIKKTNRRVTFEYSLIKGVNDSEKEAKALAKLLKGMLCHVNLIPINKVEEREYEKPDKAFIYKFRDSLEKNNIPATVRMSMGSDISGACGQLRRKYK.

The active-site Proton acceptor is E94. A Radical SAM core domain is found at 100 to 330 (YDSRVTVCVS…ATVRMSMGSD (231 aa)). A disulfide bond links C107 and C335. Residues C114, C118, and C121 each coordinate [4Fe-4S] cluster. Residues 161–162 (GE), S193, 216–218 (SLH), and N292 contribute to the S-adenosyl-L-methionine site. The active-site S-methylcysteine intermediate is C335.

It belongs to the radical SAM superfamily. RlmN family. [4Fe-4S] cluster is required as a cofactor.

The protein localises to the cytoplasm. The enzyme catalyses adenosine(2503) in 23S rRNA + 2 reduced [2Fe-2S]-[ferredoxin] + 2 S-adenosyl-L-methionine = 2-methyladenosine(2503) in 23S rRNA + 5'-deoxyadenosine + L-methionine + 2 oxidized [2Fe-2S]-[ferredoxin] + S-adenosyl-L-homocysteine. It catalyses the reaction adenosine(37) in tRNA + 2 reduced [2Fe-2S]-[ferredoxin] + 2 S-adenosyl-L-methionine = 2-methyladenosine(37) in tRNA + 5'-deoxyadenosine + L-methionine + 2 oxidized [2Fe-2S]-[ferredoxin] + S-adenosyl-L-homocysteine. In terms of biological role, specifically methylates position 2 of adenine 2503 in 23S rRNA and position 2 of adenine 37 in tRNAs. The protein is Probable dual-specificity RNA methyltransferase RlmN of Clostridioides difficile (strain 630) (Peptoclostridium difficile).